Consider the following 332-residue polypeptide: 2,3-diketo-L-gulonate reductase (332 aa).

The active-site Proton donor is the histidine 44. NAD(+) is bound by residues 168 to 174 (ITMVDMS), 224 to 225 (WK), and 304 to 306 (GHE).

Belongs to the LDH2/MDH2 oxidoreductase family. DlgD subfamily. In terms of assembly, homodimer.

It is found in the cytoplasm. It catalyses the reaction 3-dehydro-L-gulonate + NAD(+) = 2,3-dioxo-L-gulonate + NADH + H(+). The catalysed reaction is 3-dehydro-L-gulonate + NADP(+) = 2,3-dioxo-L-gulonate + NADPH + H(+). Functionally, catalyzes the reduction of 2,3-diketo-L-gulonate in the presence of NADH, to form 3-keto-L-gulonate. The chain is 2,3-diketo-L-gulonate reductase from Salmonella newport (strain SL254).